The chain runs to 133 residues: UPF0344 protein SE_0666 (133 aa).

The next 4 helical transmembrane spans lie at 1 to 21 (MLHVHILSWVLAIILFIATYL), 42 to 62 (LFMLLTLISGFWELIEEFMAA), 71 to 91 (MLLTLKMLCGLAVIAFMEISI), and 103 to 123 (FFWITIILIIITMAIGVILPW).

The protein belongs to the UPF0344 family.

The protein localises to the cell membrane. The sequence is that of UPF0344 protein SE_0666 from Staphylococcus epidermidis (strain ATCC 12228 / FDA PCI 1200).